Reading from the N-terminus, the 270-residue chain is Probable septum site-determining protein MinC (270 aa).

Belongs to the MinC family. Interacts with MinD and FtsZ.

In terms of biological role, cell division inhibitor that blocks the formation of polar Z ring septums. Rapidly oscillates between the poles of the cell to destabilize FtsZ filaments that have formed before they mature into polar Z rings. Prevents FtsZ polymerization. This chain is Probable septum site-determining protein MinC, found in Cupriavidus necator (strain ATCC 17699 / DSM 428 / KCTC 22496 / NCIMB 10442 / H16 / Stanier 337) (Ralstonia eutropha).